Reading from the N-terminus, the 181-residue chain is Immunity-related GTPase family M protein (181 aa).

In terms of domain architecture, IRG-type G spans 32-181 (TPVNITMAGD…NLQKERVCEY (150 aa)). GTP-binding positions include 41 to 48 (DSGNGMST), 66 to 70 (TELVK), and 147 to 149 (KLD).

This sequence belongs to the TRAFAC class dynamin-like GTPase superfamily. IRG family. Interacts with ULK1; promoting the coassembly of ULK1 and BECN1. Interacts with BECN1; enhancing BECN1-interacting partners and influencing the composition of the BECN1 complex. Interacts with ATG16L1. Interacts with NOD2; promoting IRGM 'Lys-63'-linked polyubiquitination, which is required for interactions with the core autophagy factors. Interacts with STX17; promoting STX17 recruitment to autophagosomes. Interacts with ATG8 proteins (GABARAP, GABARAPL1, GABARAPL2, MAP1LC3A, MAP1LC3B and MAP1LC3C); promoting STX17 recruitment to autophagosomes. Interacts with TFEB; promoting association between TFEB and PPP3CB and TFEB dephosphorylation. Interacts with PPP3CB; promoting association between TFEB and PPP3CB and TFEB dephosphorylation. Interacts with NLRP3; preventing NLRP3 inflammasome assembly and promoting SQSTM1/p62-dependent autophagic degradation of NLRP3. Interacts with CGAS; promoting SQSTM1/p62-dependent autophagic degradation of CGAS. Interacts with RIGI/RIG-I; promoting SQSTM1/p62-dependent autophagic degradation of RIGI/RIG-I. Interacts with NOD1; promoting SQSTM1/p62-dependent autophagic degradation of RIGI/RIG-I. Interacts with NOD2; promoting SQSTM1/p62-dependent autophagic degradation of RIGI/RIG-I. Interacts with RIPK2; promoting SQSTM1/p62-dependent autophagic degradation of RIGI/RIG-I. Ubiquitinated via 'Lys-63'-linked polyubiquitination in a NOD2-dependent process. 'Lys-63'-linked polyubiquitination is required for interactions with the core autophagy factors. Widely expressed (at protein level). Expressed in several tissues including colon, small bowel and peripheral blood leukocytes.

The protein resides in the golgi apparatus membrane. The protein localises to the cell membrane. It localises to the cytoplasmic vesicle. Its subcellular location is the phagosome membrane. It is found in the autophagosome membrane. The protein resides in the lysosome membrane. The protein localises to the late endosome membrane. It localises to the mitochondrion membrane. Its subcellular location is the cell projection. It is found in the phagocytic cup. The protein resides in the mitochondrion. It carries out the reaction GTP + H2O = GDP + phosphate + H(+). Immunity-related GTPase that plays important roles in innate immunity and inflammatory response. Acts as a dynamin-like protein that binds to intracellular membranes and promotes remodeling and trafficking of those membranes. Required for clearance of acute protozoan and bacterial infections by interacting with autophagy and lysosome regulatory proteins, thereby promoting the fusion of phagosomes with lysosomes for efficient degradation of cargo including microbes. Regulates selective autophagy, including xenophagy and mitophagy, both directly and indirectly. Directly regulates autophagy by acting as a molecular adapter that promotes the coassembly of the core autophagy machinery to mediate antimicrobial defense: IRGM (1) activates AMPK, which in turn phosphorylates ULK1 and BECN1 to induce autophagy, (2) promotes the coassembly of ULK1 and BECN1, enhancing BECN1-interacting partners and (3) influences the composition of the BECN1 complex, by competing with the negative regulators BCL2 and RUBCN, to trigger autophagy. Also activates autophagy by promoting recruitment of STX17 to autophagosomes. In collaboration with ATG8 proteins, regulate lysosomal biogenesis, a fundamental process for any autophagic pathway, by promoting TFEB dephosphorylation. Also modulates autophagy by assisting with autophagosome formation and preventing lysosomal deacidification. While activating autophagy, acts as a key negative regulator of the inflammatory and interferon responses both by (1) promoting mitophagy and (2) mediating autophagy-dependent degradation of effectors of the inflammatory response. Promotes degradation of damaged and IFNG/IFN-gamma-stressed mitochondria via mitophagy, preventing cytosolic release of ligands that activate inflammation. Acts as a suppressor of inflammation by promoting recruitment of inflammation effectors, such as CGAS, RIGI/RIG-I and NLRP3, to autophagosome membranes, leading to their SQSTM1/p62-dependent autophagic degradation. Also directly inhibits assembly of the NLRP3 inflammasome by preventing the association between NLRP3 and PYCARD. Acts as a negative regulator of antiviral innate immune response by suppressing the RIPK2-dependent pro-inflammatory response: mediates recruitment of RIPosomes, composed of RIPK2 and NOD1 or NOD2, to autophagosome membranes, promoting their SQSTM1/p62-dependent autophagic degradation. Functionally, acts as a positive regulator of mitophagy in response to intracellular mycobacteria infection: specifically binds cardiolipin, leading to its translocation to mitochondria, where it promotes affected mitochondrial fission and mitophagy. In terms of biological role, (Microbial infection) Following infection by hepatitis C virus (HCV), promotes HCV-triggered membrane remodeling, leading to autophagy and Golgi fragmentation, a step required for HCV replication. This chain is Immunity-related GTPase family M protein, found in Homo sapiens (Human).